The primary structure comprises 219 residues: Protein-L-isoaspartate O-methyltransferase 2 (219 aa).

Serine 66 is a catalytic residue.

Belongs to the methyltransferase superfamily. L-isoaspartyl/D-aspartyl protein methyltransferase family.

It localises to the cytoplasm. It carries out the reaction [protein]-L-isoaspartate + S-adenosyl-L-methionine = [protein]-L-isoaspartate alpha-methyl ester + S-adenosyl-L-homocysteine. Catalyzes the methyl esterification of L-isoaspartyl residues in peptides and proteins that result from spontaneous decomposition of normal L-aspartyl and L-asparaginyl residues. It plays a role in the repair and/or degradation of damaged proteins. The sequence is that of Protein-L-isoaspartate O-methyltransferase 2 from Marinobacter nauticus (strain ATCC 700491 / DSM 11845 / VT8) (Marinobacter aquaeolei).